Reading from the N-terminus, the 700-residue chain is Elongation factor G (700 aa).

The 277-residue stretch at 10 to 286 folds into the tr-type G domain; that stretch reads NKVRNIGIMA…AVIDYLPNPL (277 aa). GTP is bound by residues 19–26, 83–87, and 137–140; these read AHIDAGKT, DTPGH, and NKMD.

This sequence belongs to the TRAFAC class translation factor GTPase superfamily. Classic translation factor GTPase family. EF-G/EF-2 subfamily.

The protein localises to the cytoplasm. Catalyzes the GTP-dependent ribosomal translocation step during translation elongation. During this step, the ribosome changes from the pre-translocational (PRE) to the post-translocational (POST) state as the newly formed A-site-bound peptidyl-tRNA and P-site-bound deacylated tRNA move to the P and E sites, respectively. Catalyzes the coordinated movement of the two tRNA molecules, the mRNA and conformational changes in the ribosome. The chain is Elongation factor G from Rhodococcus jostii (strain RHA1).